We begin with the raw amino-acid sequence, 434 residues long: MLKRLCTILAASALAAPLALGIARANGTEELTPYKMIRSLQYVQDSVVLGDHSAIEMQRFMLGAIDERLRAADHSAFRDPRNVDAALVYVMSGGNPATLDLLADRDIEGNFDSRVTDALRQYLNGKGPLIVENLTKAAPEYKNSRIGPYLFLILGNAMSQQDPIEAMKHYDWARLTAPGTIIEEAALRRSVSLAAQAGLPEKGFRYALNYARRYLTSPFASQFADVFVELAVAHFDEAADGRVSEILSFMDSARQREVYLRVARRAAIAGNQALARLASRRAEELAGDDSSRSQVLASFYEGLAAVPSADVFSAAEALEAIPDEKLSPRDRALREAAKAVADAVVRPPLGESPAQAPAPIAERPAGEQSELAAEESGSGMSPFGQPVEASPGRPSEMTAEADVAASDDPALDGFLASGRSKIDEIDALLKGEGQ.

The signal sequence occupies residues 1 to 15; it reads MLKRLCTILAASALA. Residues 344 to 417 form a disordered region; the sequence is VVRPPLGESP…DPALDGFLAS (74 aa).

It localises to the periplasm. In terms of biological role, required for the rotation of the flagellar motor. Might control the energy flux or coupling that drives flagellar rotation. The polypeptide is Chemotaxis protein MotC (motC) (Rhizobium meliloti (strain 1021) (Ensifer meliloti)).